A 940-amino-acid chain; its full sequence is Reticulon-3 (940 aa).

A compositionally biased stretch (low complexity) spans 1 to 24 (MAESSAATQSPSVSSSSSGAEPST). Disordered stretches follow at residues 1–32 (MAES…GGSP), 71–91 (SSEI…LGSH), and 129–182 (DIPC…ALDL). Position 2 is an N-acetylalanine (alanine 2). The Cytoplasmic segment spans residues 2-771 (AESSAATQSP…KKTGFVFGTT (770 aa)). At serine 31 the chain carries Phosphoserine. Phosphoserine is present on residues serine 196, serine 204, serine 209, serine 212, serine 249, and serine 282. Disordered regions lie at residues 314–335 (AKQQ…RSEH), 381–405 (KGYL…ISGS), and 428–512 (EVTE…LEGQ). Positions 430-447 (TEVDSSGESDDTVIEDTT) are enriched in acidic residues. Positions 472 to 490 (TSERENKETTSHETVRSEM) are enriched in basic and acidic residues. The span at 491-512 (YENSEQQQAHAETPTQRSLEGQ) shows a compositional bias: polar residues. Serine 508 is subject to Phosphoserine. The residue at position 572 (threonine 572) is a Phosphothreonine. 3 positions are modified to phosphoserine: serine 575, serine 576, and serine 652. 2 disordered regions span residues 623–655 (NKLS…SSDL) and 672–701 (QVQA…SDIL). The segment covering 689–699 (DPQSGPQNSSD) has biased composition (polar residues). In terms of domain architecture, Reticulon spans 752–940 (VHDLIFWRDV…LPGIAKKKAE (189 aa)). Residues 772–795 (LIMLLSLAAFSVISVVSYLILALL) constitute an intramembrane region (helical). Residues 796–852 (SVTISFRVYKSVIQAVQKSEEGHPFKAYLDVDITLSSEAFHSYMNAAMVHVNKALKL) are Cytoplasmic-facing. Residues 853–875 (IIRLFLVEDLVDSLKLAVFMWLM) constitute an intramembrane region (helical). Residues 876–879 (TYVG) are Cytoplasmic-facing. An intramembrane region (helical) is located at residues 880–902 (AVFNGITLLILAELLVFSVPIVY). Positions 895-940 (VFSVPIVYEKYKTQIDHYVGIARDQTKSIVEKIQAKLPGIAKKKAE) are interaction with FADD. The Cytoplasmic portion of the chain corresponds to 903-940 (EKYKTQIDHYVGIARDQTKSIVEKIQAKLPGIAKKKAE). Residues 908-910 (QID) form an interaction with BACE1 region.

In terms of assembly, homodimer. Interacts with RTN4. Isoform 2 interacts with BACE1, BACE2, BCL2 and FADD. Interacts with ATL2. Interacts with TMEM33. Interacts with ATL1. Interacts with ZFYVE27 and with KIF5A in a ZFYVE27-dependent manner. Interacts with RIGI. Interacts with TRIM25. Present in olfactory bulb, olfactory epithelium and retina (at protein level).

The protein resides in the endoplasmic reticulum membrane. Its subcellular location is the golgi apparatus membrane. In terms of biological role, may be involved in membrane trafficking in the early secretory pathway. Inhibits BACE1 activity and amyloid precursor protein processing. May induce caspase-8 cascade and apoptosis. May favor BCL2 translocation to the mitochondria upon endoplasmic reticulum stress. Induces the formation of endoplasmic reticulum tubules. Acts also as an inflammation-resolving regulator by interacting with both TRIM25 and RIGI, subsequently impairing RIGI 'Lys-63'-linked polyubiquitination leading to IRF3 and NF-kappa-B inhibition. This is Reticulon-3 (Rtn3) from Rattus norvegicus (Rat).